The following is a 238-amino-acid chain: Orotidine 5'-phosphate decarboxylase (238 aa).

Substrate contacts are provided by residues aspartate 11, lysine 32, 59–68, threonine 123, arginine 185, glutamine 194, glycine 214, and arginine 215; that span reads DLKFHDIPNT. Residue lysine 61 is the Proton donor of the active site.

The protein belongs to the OMP decarboxylase family. Type 1 subfamily. As to quaternary structure, homodimer.

The catalysed reaction is orotidine 5'-phosphate + H(+) = UMP + CO2. Its pathway is pyrimidine metabolism; UMP biosynthesis via de novo pathway; UMP from orotate: step 2/2. Functionally, catalyzes the decarboxylation of orotidine 5'-monophosphate (OMP) to uridine 5'-monophosphate (UMP). The polypeptide is Orotidine 5'-phosphate decarboxylase (Nostoc sp. (strain PCC 7120 / SAG 25.82 / UTEX 2576)).